Here is a 152-residue protein sequence, read N- to C-terminus: D-aminoacyl-tRNA deacylase (152 aa).

The short motif at 137–138 (GP) is the Gly-cisPro motif, important for rejection of L-amino acids element.

It belongs to the DTD family. In terms of assembly, homodimer.

Its subcellular location is the cytoplasm. The enzyme catalyses glycyl-tRNA(Ala) + H2O = tRNA(Ala) + glycine + H(+). It carries out the reaction a D-aminoacyl-tRNA + H2O = a tRNA + a D-alpha-amino acid + H(+). Its function is as follows. An aminoacyl-tRNA editing enzyme that deacylates mischarged D-aminoacyl-tRNAs. Also deacylates mischarged glycyl-tRNA(Ala), protecting cells against glycine mischarging by AlaRS. Acts via tRNA-based rather than protein-based catalysis; rejects L-amino acids rather than detecting D-amino acids in the active site. By recycling D-aminoacyl-tRNA to D-amino acids and free tRNA molecules, this enzyme counteracts the toxicity associated with the formation of D-aminoacyl-tRNA entities in vivo and helps enforce protein L-homochirality. The chain is D-aminoacyl-tRNA deacylase from Thermus aquaticus.